Reading from the N-terminus, the 362-residue chain is Peptide chain release factor 1 (362 aa).

Gln237 carries the N5-methylglutamine modification.

The protein belongs to the prokaryotic/mitochondrial release factor family. Methylated by PrmC. Methylation increases the termination efficiency of RF1.

Its subcellular location is the cytoplasm. Functionally, peptide chain release factor 1 directs the termination of translation in response to the peptide chain termination codons UAG and UAA. The protein is Peptide chain release factor 1 of Aliivibrio salmonicida (strain LFI1238) (Vibrio salmonicida (strain LFI1238)).